We begin with the raw amino-acid sequence, 697 residues long: Polyribonucleotide nucleotidyltransferase (697 aa).

Residues D486 and D492 each coordinate Mg(2+). Positions 553 to 612 constitute a KH domain; it reads PRIHTIKIHPDKIKDVIGKCGSVIRALTEETKTIIDIEDDGTVTVAATDSIKAQQAICRI. In terms of domain architecture, S1 motif spans 622-690; it reads GSIYHGKVTR…RQGRIRLSMK (69 aa).

This sequence belongs to the polyribonucleotide nucleotidyltransferase family. As to quaternary structure, component of the RNA degradosome, which is a multiprotein complex involved in RNA processing and mRNA degradation. Mg(2+) is required as a cofactor.

It is found in the cytoplasm. It catalyses the reaction RNA(n+1) + phosphate = RNA(n) + a ribonucleoside 5'-diphosphate. Involved in mRNA degradation. Catalyzes the phosphorolysis of single-stranded polyribonucleotides processively in the 3'- to 5'-direction. The sequence is that of Polyribonucleotide nucleotidyltransferase from Baumannia cicadellinicola subsp. Homalodisca coagulata.